The sequence spans 217 residues: IMPACT family member YvyE (217 aa).

This sequence belongs to the IMPACT family.

The polypeptide is IMPACT family member YvyE (yvyE) (Bacillus subtilis (strain 168)).